The chain runs to 183 residues: Translation initiation factor IF-3 (183 aa).

This sequence belongs to the IF-3 family. Monomer.

It localises to the cytoplasm. Its function is as follows. IF-3 binds to the 30S ribosomal subunit and shifts the equilibrium between 70S ribosomes and their 50S and 30S subunits in favor of the free subunits, thus enhancing the availability of 30S subunits on which protein synthesis initiation begins. The chain is Translation initiation factor IF-3 from Yersinia pseudotuberculosis serotype O:1b (strain IP 31758).